The chain runs to 158 residues: Succinate dehydrogenase assembly factor 2, mitochondrial (158 aa).

The N-terminal 23 residues, 1-23, are a transit peptide targeting the mitochondrion; sequence MLRQLLATARRLLLPLATPKRCL.

Belongs to the SDHAF2 family. As to quaternary structure, interacts with the flavoprotein subunit within the SDH catalytic dimer.

Its subcellular location is the mitochondrion matrix. Plays an essential role in the assembly of succinate dehydrogenase (SDH), an enzyme complex (also referred to as respiratory complex II) that is a component of both the tricarboxylic acid (TCA) cycle and the mitochondrial electron transport chain, and which couples the oxidation of succinate to fumarate with the reduction of ubiquinone (coenzyme Q) to ubiquinol. Required for flavinylation (covalent attachment of FAD) of the flavoprotein subunit of the SDH catalytic dimer. This chain is Succinate dehydrogenase assembly factor 2, mitochondrial, found in Drosophila virilis (Fruit fly).